The chain runs to 235 residues: tRNA (cytidine-2'-O-)-methyltransferase TrmJ (235 aa).

S-adenosyl-L-methionine-binding positions include 77–79, glycine 111, isoleucine 131, and 138–140; these read TSS and PVL.

The protein belongs to the class IV-like SAM-binding methyltransferase superfamily. RNA methyltransferase TrmH family. In terms of assembly, homodimer.

It is found in the cytoplasm. It carries out the reaction cytidine(32) in tRNA + S-adenosyl-L-methionine = 2'-O-methylcytidine(32) in tRNA + S-adenosyl-L-homocysteine + H(+). Functionally, catalyzes the formation of 2'O-methylated cytidine (Cm32) at position 32 in tRNA. Is specific for cytidine. This is tRNA (cytidine-2'-O-)-methyltransferase TrmJ from Sulfolobus acidocaldarius (strain ATCC 33909 / DSM 639 / JCM 8929 / NBRC 15157 / NCIMB 11770).